The sequence spans 87 residues: MVNMKASMFLTFAGLVLLFVVSYASESEEKEFPKEMLSSIFAVDNDFKQEERDCAGYMRECKEKLCCSGYVCSSRWKWCVLPAPWRR.

Positions 1 to 24 are cleaved as a signal peptide; that stretch reads MVNMKASMFLTFAGLVLLFVVSYA. A propeptide spanning residues 25 to 52 is cleaved from the precursor; sequence SESEEKEFPKEMLSSIFAVDNDFKQEER. Disulfide bonds link C54-C67, C61-C72, and C66-C79.

Belongs to the neurotoxin 10 (Hwtx-1) family. 51 (Hntx-8) subfamily. Hntx-8 sub-subfamily. Expressed by the venom gland.

It is found in the secreted. Functionally, ion channel inhibitor. The sequence is that of U3-theraphotoxin-Hhn1a 7 from Cyriopagopus hainanus (Chinese bird spider).